We begin with the raw amino-acid sequence, 432 residues long: Adenylosuccinate lyase (432 aa).

N(6)-(1,2-dicarboxyethyl)-AMP is bound by residues 4–5 (RY), 67–69 (RHD), and 93–94 (TS). Histidine 141 serves as the catalytic Proton donor/acceptor. Glutamine 212 lines the N(6)-(1,2-dicarboxyethyl)-AMP pocket. The Proton donor/acceptor role is filled by serine 262. Residues serine 263, 268–270 (KRN), asparagine 276, and 307–311 (SAERI) each bind N(6)-(1,2-dicarboxyethyl)-AMP.

Belongs to the lyase 1 family. Adenylosuccinate lyase subfamily. Homodimer and homotetramer. Residues from neighboring subunits contribute catalytic and substrate-binding residues to each active site.

It carries out the reaction N(6)-(1,2-dicarboxyethyl)-AMP = fumarate + AMP. The catalysed reaction is (2S)-2-[5-amino-1-(5-phospho-beta-D-ribosyl)imidazole-4-carboxamido]succinate = 5-amino-1-(5-phospho-beta-D-ribosyl)imidazole-4-carboxamide + fumarate. Its pathway is purine metabolism; AMP biosynthesis via de novo pathway; AMP from IMP: step 2/2. The protein operates within purine metabolism; IMP biosynthesis via de novo pathway; 5-amino-1-(5-phospho-D-ribosyl)imidazole-4-carboxamide from 5-amino-1-(5-phospho-D-ribosyl)imidazole-4-carboxylate: step 2/2. Catalyzes two reactions in de novo purine nucleotide biosynthesis. Catalyzes the breakdown of 5-aminoimidazole- (N-succinylocarboxamide) ribotide (SAICAR or 2-[5-amino-1-(5-phospho-beta-D-ribosyl)imidazole-4-carboxamido]succinate) to 5-aminoimidazole-4-carboxamide ribotide (AICAR or 5-amino-1-(5-phospho-beta-D-ribosyl)imidazole-4-carboxamide) and fumarate, and of adenylosuccinate (ADS or N(6)-(1,2-dicarboxyethyl)-AMP) to adenosine monophosphate (AMP) and fumarate. The chain is Adenylosuccinate lyase (purB) from Streptococcus mutans serotype c (strain ATCC 700610 / UA159).